The sequence spans 244 residues: tRNA pseudouridine synthase B (244 aa).

Catalysis depends on Asp-46, which acts as the Nucleophile.

Belongs to the pseudouridine synthase TruB family. Type 1 subfamily.

It carries out the reaction uridine(55) in tRNA = pseudouridine(55) in tRNA. In terms of biological role, responsible for synthesis of pseudouridine from uracil-55 in the psi GC loop of transfer RNAs. This chain is tRNA pseudouridine synthase B, found in Bordetella avium (strain 197N).